Here is a 296-residue protein sequence, read N- to C-terminus: Phosphatidylglycerol--prolipoprotein diacylglyceryl transferase (296 aa).

4 consecutive transmembrane segments (helical) span residues 10–30 (IAFSLGPVQVHWYGLMYLAAF), 57–77 (LLFYGMLGVVLGGRIGYMLFY), 92–112 (VWEGGMSFHGGLLGVLIACWL), and 119–139 (LHFFDVMDFVAPLVPLGLGFG). R140 contributes to the a 1,2-diacyl-sn-glycero-3-phospho-(1'-sn-glycerol) binding site. 3 helical membrane passes run 194–214 (QLYEAALEGVVMFVVLWTFSM), 220–240 (YAVSGLFALLYGVFRFIVEFV), and 254–274 (WLTMGQILSLPLIAVGLVLLA).

It belongs to the Lgt family.

The protein resides in the cell inner membrane. It catalyses the reaction L-cysteinyl-[prolipoprotein] + a 1,2-diacyl-sn-glycero-3-phospho-(1'-sn-glycerol) = an S-1,2-diacyl-sn-glyceryl-L-cysteinyl-[prolipoprotein] + sn-glycerol 1-phosphate + H(+). Its pathway is protein modification; lipoprotein biosynthesis (diacylglyceryl transfer). Its function is as follows. Catalyzes the transfer of the diacylglyceryl group from phosphatidylglycerol to the sulfhydryl group of the N-terminal cysteine of a prolipoprotein, the first step in the formation of mature lipoproteins. The protein is Phosphatidylglycerol--prolipoprotein diacylglyceryl transferase of Xanthomonas euvesicatoria pv. vesicatoria (strain 85-10) (Xanthomonas campestris pv. vesicatoria).